Reading from the N-terminus, the 217-residue chain is Cytokinin riboside 5'-monophosphate phosphoribohydrolase LOG7 (217 aa).

Substrate is bound by residues glutamate 79, 97–98 (RK), 114–120 (GYGTLEE), and threonine 126.

It belongs to the LOG family. In terms of tissue distribution, expressed in roots and shoots. Detected in the epidermis of the root elongation zone, cotyledon and leaves, in trichomes and pollen.

The protein resides in the cytoplasm. It is found in the nucleus. The enzyme catalyses N(6)-(dimethylallyl)adenosine 5'-phosphate + H2O = N(6)-dimethylallyladenine + D-ribose 5-phosphate. It catalyses the reaction 9-ribosyl-trans-zeatin 5'-phosphate + H2O = trans-zeatin + D-ribose 5-phosphate. Its function is as follows. Cytokinin-activating enzyme working in the direct activation pathway. Phosphoribohydrolase that converts inactive cytokinin nucleotides to the biologically active free-base forms. This Arabidopsis thaliana (Mouse-ear cress) protein is Cytokinin riboside 5'-monophosphate phosphoribohydrolase LOG7 (LOG7).